We begin with the raw amino-acid sequence, 381 residues long: L-lactate dehydrogenase (381 aa).

In terms of domain architecture, FMN hydroxy acid dehydrogenase spans 1-380; it reads MIISASTDYR…TRDSLVRELG (380 aa). Y24 is a substrate binding site. Residues S106 and Q127 each coordinate FMN. Y129 is a binding site for substrate. Position 155 (T155) interacts with FMN. Substrate is bound at residue R164. K251 serves as a coordination point for FMN. The Proton acceptor role is filled by H275. R278 is a substrate binding site. An FMN-binding site is contributed by 306–330; sequence DSGIRSGLDVVRMIALGADTVLIGR.

Belongs to the FMN-dependent alpha-hydroxy acid dehydrogenase family. Homotetramer. FMN is required as a cofactor.

The protein localises to the cell inner membrane. It carries out the reaction (S)-lactate + A = pyruvate + AH2. In terms of biological role, catalyzes the conversion of L-lactate to pyruvate. Is coupled to the respiratory chain. This chain is L-lactate dehydrogenase, found in Pseudomonas putida (strain ATCC 700007 / DSM 6899 / JCM 31910 / BCRC 17059 / LMG 24140 / F1).